The chain runs to 108 residues: uncharacterized protein (108 aa).

At threonine 56 the chain carries Phosphothreonine. A disordered region spans residues 89 to 108 (AQAKGTEQAEALKKGTSKWF).

It is found in the cytoplasm. This is an uncharacterized protein from Schizosaccharomyces pombe (strain 972 / ATCC 24843) (Fission yeast).